Consider the following 153-residue polypeptide: Ribonuclease K3 (153 aa).

Positions 1 to 26 (MGPDLRCFPLLLLLLGLWWSVRPLCA) are cleaved as a signal peptide. Asparagine 30 carries an N-linked (GlcNAc...) asparagine glycan. The active-site Proton acceptor is histidine 41. Disulfide bonds link cysteine 49–cysteine 107, cysteine 63–cysteine 117, cysteine 81–cysteine 132, and cysteine 88–cysteine 95. Asparagine 58 is a glycosylation site (N-linked (GlcNAc...) asparagine). 64–68 (KPQNT) contributes to the substrate binding site. Asparagine 85 carries N-linked (GlcNAc...) asparagine glycosylation. Residue lysine 89 coordinates substrate. Catalysis depends on histidine 148, which acts as the Proton donor.

The protein belongs to the pancreatic ribonuclease family. Interacts (via N-terminus) with bacterial lipopolysaccharide (LPS). Kidney.

It is found in the secreted. Its subcellular location is the lysosome. The protein resides in the cytoplasmic granule. Ribonuclease which shows a preference for the pyrimidines uridine and cytosine. Has potent antibacterial activity against a range of Gram-positive and Gram-negative bacteria, including P.aeruginosa, A.baumanii, M.luteus, S.aureus, E.faecalis, E.faecium, S.saprophyticus and E.coli. Causes loss of bacterial membrane integrity, and also promotes agglutination of Gram-negative bacteria. Probably contributes to urinary tract sterility. Bactericidal activity is independent of RNase activity. The protein is Ribonuclease K3 (RNASE6) of Sus scrofa (Pig).